The chain runs to 129 residues: Gas vesicle protein C (129 aa).

3 consecutive repeats follow at residues 19–51 (VTQL…LHQF), 52–84 (HQNL…LHKF), and 85–117 (HQNL…LQQF). The segment at 19–117 (VTQLFRETHE…KAQSQYLQQF (99 aa)) is 3 X 33 AA tandem repeats.

Belongs to the gas vesicle GvpC family.

It is found in the gas vesicle. Confers stability, involved in shaping gas vesicles, hollow, gas filled proteinaceous nanostructures. During planktonic growth they allow positioning of the organism at a favorable depth for light or nutrient acquisition. Functionally, cluster expression in E.coli (gvpA1-gvpA2-gvpC-gvpN-gvpJ-gvpK-gvpF-gvpG-gvpV-gvpW) allows cells to float and produces irregularly shaped gas vesicles. This Nostoc sp. (strain PCC 7120 / SAG 25.82 / UTEX 2576) protein is Gas vesicle protein C.